We begin with the raw amino-acid sequence, 365 residues long: Parathion hydrolase (365 aa).

A signal peptide (tat-type signal) is located at residues 1-29 (MQTRRVVLKSAAAAGTLLGGLAGCASVAG). 6 residues coordinate Zn(2+): H55, H57, K169, H201, H230, and D301. K169 carries the post-translational modification N6-carboxylysine.

It belongs to the metallo-dependent hydrolases superfamily. Phosphotriesterase family. Homodimer. Requires Zn(2+) as cofactor. In terms of processing, predicted to be exported by the Tat system. The position of the signal peptide cleavage has been experimentally proven.

The protein localises to the cell membrane. The catalysed reaction is An aryl dialkyl phosphate + H2O = dialkyl phosphate + an aryl alcohol.. In terms of biological role, has an unusual substrate specificity for synthetic organophosphate triesters and phosphorofluoridates. All of the phosphate triesters found to be substrates are synthetic compounds. The identity of any naturally occurring substrate for the enzyme is unknown. Has no detectable activity with phosphate monoesters or diesters and no activity as an esterase or protease. It catalyzes the hydrolysis of the insecticide paraoxon at a rate approaching the diffusion limit and thus appears to be optimally evolved for utilizing this synthetic substrate. The sequence is that of Parathion hydrolase (opd) from Brevundimonas diminuta (Pseudomonas diminuta).